A 197-amino-acid polypeptide reads, in one-letter code: ATP-dependent Clp protease proteolytic subunit 1 (197 aa).

The active-site Nucleophile is the serine 100. Histidine 125 is an active-site residue.

It belongs to the peptidase S14 family. As to quaternary structure, fourteen ClpP subunits assemble into 2 heptameric rings which stack back to back to give a disk-like structure with a central cavity, resembling the structure of eukaryotic proteasomes.

The protein resides in the cytoplasm. It catalyses the reaction Hydrolysis of proteins to small peptides in the presence of ATP and magnesium. alpha-casein is the usual test substrate. In the absence of ATP, only oligopeptides shorter than five residues are hydrolyzed (such as succinyl-Leu-Tyr-|-NHMec, and Leu-Tyr-Leu-|-Tyr-Trp, in which cleavage of the -Tyr-|-Leu- and -Tyr-|-Trp bonds also occurs).. Cleaves peptides in various proteins in a process that requires ATP hydrolysis. Has a chymotrypsin-like activity. Plays a major role in the degradation of misfolded proteins. This Gloeobacter violaceus (strain ATCC 29082 / PCC 7421) protein is ATP-dependent Clp protease proteolytic subunit 1.